The chain runs to 599 residues: Endo-1,4-beta-xylanase B (599 aa).

Residues Met-1–Ala-37 form the signal peptide. One can recognise a CBM2 domain in the interval Ala-38 to Ala-136. An intrachain disulfide couples Cys-39 to Cys-133. The region spanning Leu-163–Val-289 is the CBM6 domain. Positions Ser-315–Asn-595 constitute a GH10 domain. Catalysis depends on Glu-431, which acts as the Proton donor. The active-site Nucleophile is the Glu-530.

Belongs to the glycosyl hydrolase 10 (cellulase F) family.

The catalysed reaction is Endohydrolysis of (1-&gt;4)-beta-D-xylosidic linkages in xylans.. It functions in the pathway glycan metabolism; hemicellulose degradation. Functionally, xylanase B contributes to hydrolyze hemicellulose, the major component of plant cell-walls. This is Endo-1,4-beta-xylanase B (xynB) from Cellvibrio japonicus (strain Ueda107) (Pseudomonas fluorescens subsp. cellulosa).